A 126-amino-acid chain; its full sequence is UPF0102 protein gll3754 (126 aa).

This sequence belongs to the UPF0102 family.

In Gloeobacter violaceus (strain ATCC 29082 / PCC 7421), this protein is UPF0102 protein gll3754.